The primary structure comprises 190 residues: Glutathione peroxidase 2 (190 aa).

Residue selenocysteine 40 is part of the active site. Selenocysteine 40 is a non-standard amino acid (selenocysteine).

The protein belongs to the glutathione peroxidase family. As to quaternary structure, homotetramer.

Its subcellular location is the cytoplasm. The protein localises to the cytosol. It catalyses the reaction 2 glutathione + H2O2 = glutathione disulfide + 2 H2O. The catalysed reaction is a hydroperoxy polyunsaturated fatty acid + 2 glutathione = a hydroxy polyunsaturated fatty acid + glutathione disulfide + H2O. It carries out the reaction tert-butyl hydroperoxide + 2 glutathione = tert-butanol + glutathione disulfide + H2O. The enzyme catalyses cumene hydroperoxide + 2 glutathione = 2-phenylpropan-2-ol + glutathione disulfide + H2O. It catalyses the reaction (13S)-hydroperoxy-(9Z,11E)-octadecadienoate + 2 glutathione = (13S)-hydroxy-(9Z,11E)-octadecadienoate + glutathione disulfide + H2O. The catalysed reaction is (5S)-hydroperoxy-(6E,8Z,11Z,14Z)-eicosatetraenoate + 2 glutathione = (5S)-hydroxy-(6E,8Z,11Z,14Z)-eicosatetraenoate + glutathione disulfide + H2O. It carries out the reaction (12R)-hydroperoxy-(5Z,8Z,10E,14Z)-eicosatetraenoate + 2 glutathione = (12R)-hydroxy-(5Z,8Z,10E,14Z)-eicosatetraenoate + glutathione disulfide + H2O. The enzyme catalyses (15S)-hydroperoxy-(5Z,8Z,11Z,13E)-eicosatetraenoate + 2 glutathione = (15S)-hydroxy-(5Z,8Z,11Z,13E)-eicosatetraenoate + glutathione disulfide + H2O. In terms of biological role, catalyzes the reduction of hydroperoxides in a glutathione-dependent manner thus regulating cellular redox homeostasis. Can reduce small soluble hydroperoxides such as H2O2, cumene hydroperoxide and tert-butyl hydroperoxide, as well as several fatty acid-derived hydroperoxides. Cannot reduce phosphatidycholine hydroperoxide. The chain is Glutathione peroxidase 2 (GPX2) from Callithrix jacchus (White-tufted-ear marmoset).